Here is a 197-residue protein sequence, read N- to C-terminus: MGTEWHKPKLSLALVLLTLEAGWAQEGSEPVLLEGECLVVCEPGRPTAGGPGGAALGEAPPGRVAFAAVRSHHHEPAGETGNGTSGAIYFDQVLVNEGEGFDRTSGCFVAPVRGVYSFRFHVVKVYNRQTVQVSLMLNTWPVISAFANDPDVTREAATSSVLLPLDPGDRVSLRLRRGNLLGGWKYSSFSGFLIFPL.

A signal peptide spans 1 to 24; that stretch reads MGTEWHKPKLSLALVLLTLEAGWA. In terms of domain architecture, C1q spans 59–197; sequence APPGRVAFAA…SFSGFLIFPL (139 aa). The tract at residues 64–197 is necessary for interaction with CBLN3, and homotrimerization; sequence VAFAAVRSHH…SFSGFLIFPL (134 aa). A glycan (N-linked (GlcNAc...) asparagine) is linked at N82.

As to quaternary structure, heterohexamer; disulfide-linked heterotrimers. Interacts with CBLN1. May also form oligomers with CBLN2 and CBLN4. In terms of tissue distribution, expressed in brain, restricted to the cerebellar cortex. Within the cerebellum, expressed in granule layers (at protein level). Also detected in postsynaptic Purkinje cell spines (at protein level).

The protein localises to the endoplasmic reticulum. Its subcellular location is the golgi apparatus. The protein resides in the cis-Golgi network. It localises to the secreted. It is found in the synapse. Functionally, may be involved in synaptic functions in the CNS. This chain is Cerebellin-3 (Cbln3), found in Mus musculus (Mouse).